We begin with the raw amino-acid sequence, 231 residues long: CLAVATA3/ESR (CLE)-related protein 4B-2 (231 aa).

An N-terminal signal peptide occupies residues 1-21; that stretch reads MATNTMLCLLILSVVLALAFA. The tract at residues 21 to 83 is required for secretion from the host cytoplasm to the host apoplasm; sequence ATNKKGDEEP…SNQLPNNNWM (63 aa). The N-linked (GlcNAc...) asparagine glycan is linked to Asn32. The segment at 116–231 is disordered; it reads RKTGMHSQRH…APAGPDPIHH (116 aa). Composition is skewed to basic and acidic residues over residues 125 to 137 and 144 to 221; these read HHEE…EKRV and PIHH…EKRG. Residues 127–135 form an A-1 repeat; that stretch reads EETTLEQEK. Residues 127–219 form a 5 X approximate repeat A region; it reads EETTLEQEKR…HEETTFEQEK (93 aa). One copy of the CLE-1 repeat lies at 136-147; that stretch reads RVAGAGPDPIHH. The segment at 136-231 is 5 X approximate repeat CLE; it reads RVAGAGPDPI…APAGPDPIHH (96 aa). One copy of the A-2 repeat lies at 148-156; it reads EETTLEQEK. One copy of the CLE-2 repeat lies at 157–168; the sequence is RAVPAGPDPKHH. One copy of the A-3 repeat lies at 169 to 177; that stretch reads EETTLEQEK. The stretch at 178–189 is one CLE-3 repeat; sequence RAVPAGPDPKHH. The A-4 repeat unit spans residues 190–198; that stretch reads EETTLEQEK. One copy of the CLE-4 repeat lies at 199-210; that stretch reads RAVPAGPDPKHH. An A-5 repeat occupies 211–219; it reads EETTFEQEK. Residues 220 to 231 form a CLE-5 repeat; that stretch reads RGAPAGPDPIHH.

The protein belongs to the CLV3/ESR signal peptide family. Highly expressed exclusively within the dorsal esophageal gland cell during syncytium formation in host plants.

The protein resides in the secreted. It is found in the host cytoplasm. The protein localises to the host extracellular space. It localises to the extracellular space. Its subcellular location is the apoplast. Mimics host plant CLE extracellular signal peptides that regulate cell fate. May play a role in the differentiation or division of feeding cells (syncytia) induced in plant roots during infection. The protein is CLAVATA3/ESR (CLE)-related protein 4B-2 (CLE-4B-2) of Globodera rostochiensis (Golden nematode worm).